The primary structure comprises 521 residues: Exoglucanase 1 (521 aa).

The signal sequence occupies residues 1-17 (MLAKFAALAALVASANA). The interval 18–450 (QAVCSLTAET…FGPIGSTFSG (433 aa)) is catalytic. Residue asparagine 32 is glycosylated (N-linked (GlcNAc...) asparagine). The active-site Nucleophile is the glutamate 229. Glutamate 234 functions as the Proton donor in the catalytic mechanism. The N-linked (GlcNAc...) asparagine glycan is linked to asparagine 287. The disordered stretch occupies residues 447-486 (TFSGGSSGTPPSNPSSSVKPVTSTAKPSSTSTASNPSGTG). Residues 451–485 (GSSGTPPSNPSSSVKPVTSTAKPSSTSTASNPSGT) are linker. The region spanning 485–521 (TGAAHWAQCGGIGFSGPTTCQSPYTCQKINDYYSQCV) is the CBM1 domain. 2 disulfides stabilise this stretch: cysteine 493/cysteine 510 and cysteine 504/cysteine 520.

It belongs to the glycosyl hydrolase 7 (cellulase C) family.

Its subcellular location is the secreted. It catalyses the reaction Hydrolysis of (1-&gt;4)-beta-D-glucosidic linkages in cellulose and cellotetraose, releasing cellobiose from the non-reducing ends of the chains.. This Neurospora crassa (strain ATCC 24698 / 74-OR23-1A / CBS 708.71 / DSM 1257 / FGSC 987) protein is Exoglucanase 1 (cbh-1).